The sequence spans 510 residues: NAD(P)H-quinone oxidoreductase subunit 2, chloroplastic (510 aa).

13 helical membrane-spanning segments follow: residues 24-44 (LLLF…GLIL), 59-79 (WFYF…LFRW), 99-119 (IFQF…VEYI), 124-144 (MAIT…MFLC), 149-169 (LITI…LSGY), 183-203 (YLLM…WLYG), 229-249 (ISIA…PAPF), 295-315 (WHLL…LIAI), 323-343 (MLAY…IVGD), 354-374 (YMLF…SFGL), 395-415 (ALSL…AGFF), 418-438 (LYLF…MGLL), and 484-504 (MTVC…ILAI).

Belongs to the complex I subunit 2 family. NDH is composed of at least 16 different subunits, 5 of which are encoded in the nucleus.

Its subcellular location is the plastid. The protein resides in the chloroplast thylakoid membrane. It catalyses the reaction a plastoquinone + NADH + (n+1) H(+)(in) = a plastoquinol + NAD(+) + n H(+)(out). The enzyme catalyses a plastoquinone + NADPH + (n+1) H(+)(in) = a plastoquinol + NADP(+) + n H(+)(out). Functionally, NDH shuttles electrons from NAD(P)H:plastoquinone, via FMN and iron-sulfur (Fe-S) centers, to quinones in the photosynthetic chain and possibly in a chloroplast respiratory chain. The immediate electron acceptor for the enzyme in this species is believed to be plastoquinone. Couples the redox reaction to proton translocation, and thus conserves the redox energy in a proton gradient. In Sisyrinchium montanum (Strict blue-eyed grass), this protein is NAD(P)H-quinone oxidoreductase subunit 2, chloroplastic.